A 143-amino-acid chain; its full sequence is Transcriptional regulator MraZ (143 aa).

2 SpoVT-AbrB domains span residues 5 to 47 (EFDH…TLEE) and 76 to 119 (AVEV…DRET).

It belongs to the MraZ family. As to quaternary structure, forms oligomers.

It is found in the cytoplasm. Its subcellular location is the nucleoid. The protein is Transcriptional regulator MraZ of Staphylococcus epidermidis (strain ATCC 35984 / DSM 28319 / BCRC 17069 / CCUG 31568 / BM 3577 / RP62A).